A 349-amino-acid polypeptide reads, in one-letter code: UDP-3-O-acylglucosamine N-acyltransferase (349 aa).

Residue His242 is the Proton acceptor of the active site.

This sequence belongs to the transferase hexapeptide repeat family. LpxD subfamily. Homotrimer.

The catalysed reaction is a UDP-3-O-[(3R)-3-hydroxyacyl]-alpha-D-glucosamine + a (3R)-hydroxyacyl-[ACP] = a UDP-2-N,3-O-bis[(3R)-3-hydroxyacyl]-alpha-D-glucosamine + holo-[ACP] + H(+). It participates in bacterial outer membrane biogenesis; LPS lipid A biosynthesis. In terms of biological role, catalyzes the N-acylation of UDP-3-O-acylglucosamine using 3-hydroxyacyl-ACP as the acyl donor. Is involved in the biosynthesis of lipid A, a phosphorylated glycolipid that anchors the lipopolysaccharide to the outer membrane of the cell. In Cytophaga hutchinsonii (strain ATCC 33406 / DSM 1761 / CIP 103989 / NBRC 15051 / NCIMB 9469 / D465), this protein is UDP-3-O-acylglucosamine N-acyltransferase.